Here is a 100-residue protein sequence, read N- to C-terminus: Apolipoprotein C-II (100 aa).

A signal peptide spans 1 to 22 (MGSRFLLALFLVLLVLGCEVQA). Residues 66–74 (SVDEKLRDM) form a lipid binding region. Residues 78–100 (SSAAMTTYASIFTDQILTLLKGE) form a lipoprotein lipase cofactor region.

This sequence belongs to the apolipoprotein C2 family. In terms of processing, proapolipoprotein C-II is synthesized as a sialic acid containing glycoprotein which is subsequently desialylated prior to its proteolytic processing. Proapolipoprotein C-II, the major form found in plasma undergoes proteolytic cleavage of its N-terminal hexapeptide to generate the mature form apolipoprotein C-II, which occurs as the minor form in plasma.

It is found in the secreted. In terms of biological role, component of chylomicrons, very low-density lipoproteins (VLDL), low-density lipoproteins (LDL), and high-density lipoproteins (HDL) in plasma. Plays an important role in lipoprotein metabolism as an activator of lipoprotein lipase. The polypeptide is Apolipoprotein C-II (APOC2) (Ellobius talpinus (Northern mole vole)).